A 410-amino-acid chain; its full sequence is S-adenosylmethionine synthase (410 aa).

Position 21 (histidine 21) interacts with ATP. Aspartate 23 contributes to the Mg(2+) binding site. Glutamate 49 serves as a coordination point for K(+). L-methionine contacts are provided by glutamate 62 and glutamine 105. A flexible loop region spans residues 105–115 (QSQEIGAGVDQ). The segment at 107–133 (QEIGAGVDQSHEVRSGENTDADDQAGA) is disordered. ATP contacts are provided by residues 180 to 182 (DGK), aspartate 261, 267 to 268 (RK), alanine 284, and lysine 288. Aspartate 261 is an L-methionine binding site. Position 292 (lysine 292) interacts with L-methionine.

Belongs to the AdoMet synthase family. As to quaternary structure, homotetramer; dimer of dimers. It depends on Mg(2+) as a cofactor. K(+) serves as cofactor.

It is found in the cytoplasm. The enzyme catalyses L-methionine + ATP + H2O = S-adenosyl-L-methionine + phosphate + diphosphate. Its pathway is amino-acid biosynthesis; S-adenosyl-L-methionine biosynthesis; S-adenosyl-L-methionine from L-methionine: step 1/1. In terms of biological role, catalyzes the formation of S-adenosylmethionine (AdoMet) from methionine and ATP. The overall synthetic reaction is composed of two sequential steps, AdoMet formation and the subsequent tripolyphosphate hydrolysis which occurs prior to release of AdoMet from the enzyme. The polypeptide is S-adenosylmethionine synthase (Corynebacterium diphtheriae (strain ATCC 700971 / NCTC 13129 / Biotype gravis)).